We begin with the raw amino-acid sequence, 223 residues long: Golgi SNAP receptor complex member 1-1 (223 aa).

Residues Met-1–Asp-201 lie on the Cytoplasmic side of the membrane. Residues Asp-8–Ala-67 are a coiled coil. The helical; Anchor for type IV membrane protein transmembrane segment at Thr-202–Thr-222 threads the bilayer. A topological domain (vesicular) is located at residue Lys-223.

Belongs to the GOSR1 family. In terms of assembly, component of several multiprotein Golgi SNARE complexes.

It localises to the golgi apparatus membrane. Its function is as follows. Involved in transport from the ER to the Golgi apparatus as well as in intra-Golgi transport. It belongs to a super-family of proteins called t-SNAREs or soluble NSF (N-ethylmaleimide-sensitive factor) attachment protein receptor. In Arabidopsis thaliana (Mouse-ear cress), this protein is Golgi SNAP receptor complex member 1-1 (GOS11).